The sequence spans 109 residues: Cell division protein ZapA (109 aa).

A coiled-coil region spans residues 21–99; the sequence is PEQRDALNQA…IEQALLEQGR (79 aa).

The protein belongs to the ZapA family. Type 1 subfamily. As to quaternary structure, homodimer. Interacts with FtsZ.

The protein resides in the cytoplasm. In terms of biological role, activator of cell division through the inhibition of FtsZ GTPase activity, therefore promoting FtsZ assembly into bundles of protofilaments necessary for the formation of the division Z ring. It is recruited early at mid-cell but it is not essential for cell division. In Cronobacter sakazakii (strain ATCC BAA-894) (Enterobacter sakazakii), this protein is Cell division protein ZapA.